The sequence spans 362 residues: 3-dehydroquinate synthase (362 aa).

NAD(+) is bound by residues 70–75 (DGEQYK), 104–108 (GVIGD), 128–129 (TT), K141, and K150. Residues E183, H246, and H263 each contribute to the Zn(2+) site.

The protein belongs to the sugar phosphate cyclases superfamily. Dehydroquinate synthase family. NAD(+) is required as a cofactor. It depends on Co(2+) as a cofactor. Zn(2+) serves as cofactor.

It localises to the cytoplasm. It catalyses the reaction 7-phospho-2-dehydro-3-deoxy-D-arabino-heptonate = 3-dehydroquinate + phosphate. It functions in the pathway metabolic intermediate biosynthesis; chorismate biosynthesis; chorismate from D-erythrose 4-phosphate and phosphoenolpyruvate: step 2/7. In terms of biological role, catalyzes the conversion of 3-deoxy-D-arabino-heptulosonate 7-phosphate (DAHP) to dehydroquinate (DHQ). In Pasteurella multocida (strain Pm70), this protein is 3-dehydroquinate synthase.